A 612-amino-acid polypeptide reads, in one-letter code: uncharacterized protein (612 aa).

The next 6 helical transmembrane spans lie at 13–33, 38–58, 67–87, 107–127, 144–164, and 189–209; these read IPLT…EWLP, AILV…EGIA, TIMA…IQII, GFIV…AIFL, LLIP…LGTS, and LGLL…PILL. RCK C-terminal domains lie at 218 to 302 and 316 to 403; these read GNVA…ERGI and NNAG…LLVL. Helical transmembrane passes span 419 to 439, 459 to 479, 501 to 521, 525 to 545, 546 to 566, and 586 to 606; these read AIAI…PISV, IYGA…PLGT, LSGY…TEIL, ATVV…GLNP, LAFM…PIGY, and IGAP…MLIY.

It belongs to the SLC13A/DASS transporter (TC 2.A.47) family. NADC subfamily.

It localises to the cell membrane. This is an uncharacterized protein from Synechocystis sp. (strain ATCC 27184 / PCC 6803 / Kazusa).